We begin with the raw amino-acid sequence, 156 residues long: Snaclec rhinocetin subunit alpha (156 aa).

The first 23 residues, 1-23, serve as a signal peptide directing secretion; sequence MGRFIFLSSGWLVVFLSLSGTGA. 3 cysteine pairs are disulfide-bonded: C27-C38, C55-C150, and C125-C142. A C-type lectin domain is found at 34–151; it reads YEGHCYKFFF…CGDNYPFVCM (118 aa).

The protein belongs to the snaclec family. Heterodimer; disulfide-linked. Expressed by the venom gland.

It is found in the secreted. Its function is as follows. Antagonist of the alpha-2 subunit of the integrin alpha-2/beta-1 (ITGA2/ITGB1) on human platelets and endothelial cells. This protein inhibits collagen-stimulated activation of human platelets in a dose-dependent manner. In addition, it antagonizes the binding of monoclonal antibodies against the alpha-2 subunit of integrin alpha-2/beta-1 to platelets and it coimmunoprecipitates with this integrin. This is Snaclec rhinocetin subunit alpha from Bitis rhinoceros (West African gaboon viper).